The primary structure comprises 556 residues: Potassium-transporting ATPase potassium-binding subunit (556 aa).

10 helical membrane passes run 6 to 26 (AGLIFLAVLVAALVAVHVPLG), 65 to 85 (GVLAFSSVSIIFLFVLQLVQG), 133 to 153 (GLAVQNFVSAAVGMAVAVALV), 176 to 196 (LRILLPISIVGAVLLVAGGAI), 249 to 269 (PTAWTNWLEVFLILVIGFSLP), 283 to 303 (YAIASVMASLYLLSTGFMLWF), 378 to 398 (GLYGMLVLAVITVFVAGLMVG), 419 to 439 (YFLVTPLIVLTGTAIAMALPG), 483 to 503 (ALGLAMAFGRFLPIVLVLALA), and 526 to 546 (FVGMVAGVTLIVVALTFLPML).

It belongs to the KdpA family. In terms of assembly, the system is composed of three essential subunits: KdpA, KdpB and KdpC.

It localises to the cell membrane. Part of the high-affinity ATP-driven potassium transport (or Kdp) system, which catalyzes the hydrolysis of ATP coupled with the electrogenic transport of potassium into the cytoplasm. This subunit binds the extracellular potassium ions and delivers the ions to the membrane domain of KdpB through an intramembrane tunnel. The chain is Potassium-transporting ATPase potassium-binding subunit from Mycolicibacterium paratuberculosis (strain ATCC BAA-968 / K-10) (Mycobacterium paratuberculosis).